The following is a 104-amino-acid chain: Large ribosomal subunit protein uL24 (104 aa).

The protein belongs to the universal ribosomal protein uL24 family. As to quaternary structure, part of the 50S ribosomal subunit.

Functionally, one of two assembly initiator proteins, it binds directly to the 5'-end of the 23S rRNA, where it nucleates assembly of the 50S subunit. One of the proteins that surrounds the polypeptide exit tunnel on the outside of the subunit. This Bartonella bacilliformis (strain ATCC 35685 / KC583 / Herrer 020/F12,63) protein is Large ribosomal subunit protein uL24.